Reading from the N-terminus, the 251-residue chain is ATP synthase subunit a (251 aa).

Transmembrane regions (helical) follow at residues 29 to 49 (FTQSALYMFAAVGIIALITLV), 56 to 73 (LVPGRMQSLAEAFYEFIA), 87 to 107 (FVPLVFSLFMFVLVLNLFGMI), 117 to 137 (IIVTFMLALVVILTVVIYGFM), 159 to 181 (LIVAIEVVSFISRPISLSVRLFA), 192 to 212 (IFAGFVPALLAAGIWGILSPL), and 218 to 238 (VAITALEMLVAVLQAYVFATL).

This sequence belongs to the ATPase A chain family. As to quaternary structure, F-type ATPases have 2 components, CF(1) - the catalytic core - and CF(0) - the membrane proton channel. CF(1) has five subunits: alpha(3), beta(3), gamma(1), delta(1), epsilon(1). CF(0) has three main subunits: a(1), b(2) and c(9-12). The alpha and beta chains form an alternating ring which encloses part of the gamma chain. CF(1) is attached to CF(0) by a central stalk formed by the gamma and epsilon chains, while a peripheral stalk is formed by the delta and b chains.

It localises to the cell inner membrane. Functionally, key component of the proton channel; it plays a direct role in the translocation of protons across the membrane. The sequence is that of ATP synthase subunit a from Methylobacterium sp. (strain 4-46).